We begin with the raw amino-acid sequence, 325 residues long: Bifunctional nuclease 2 (325 aa).

A BFN domain is found at 119-254; it reads CVHNNSQGRN…SLAYSDGIRS (136 aa). The UVR domain occupies 285 to 320; that stretch reads EAQEFGLIRNMLIAAVEERYKDAATWRDKLMLLRSK.

The protein belongs to the bifunctional nuclease family.

It localises to the nucleus. Its function is as follows. Bifunctional nuclease with both RNase and DNase activities. Involved in basal defense response. Participates in abscisic acid-derived callose deposition following infection by a necrotrophic pathogen. This chain is Bifunctional nuclease 2 (BBD2), found in Oryza sativa subsp. japonica (Rice).